The sequence spans 165 residues: Xanthine-guanine phosphoribosyltransferase (165 aa).

Residues 41–42 and 98–106 contribute to the 5-phospho-alpha-D-ribose 1-diphosphate site; these read RG and DDLTDTGKT. Asp-99 contacts Mg(2+). Guanine contacts are provided by Asp-102 and Ile-145. Xanthine-binding residues include Asp-102 and Ile-145. GMP contacts are provided by residues 102-106 and 144-145; these read DTGKT and WI.

Belongs to the purine/pyrimidine phosphoribosyltransferase family. XGPT subfamily. Homotetramer. Mg(2+) serves as cofactor.

Its subcellular location is the cell inner membrane. It catalyses the reaction GMP + diphosphate = guanine + 5-phospho-alpha-D-ribose 1-diphosphate. The catalysed reaction is XMP + diphosphate = xanthine + 5-phospho-alpha-D-ribose 1-diphosphate. It carries out the reaction IMP + diphosphate = hypoxanthine + 5-phospho-alpha-D-ribose 1-diphosphate. The protein operates within purine metabolism; GMP biosynthesis via salvage pathway; GMP from guanine: step 1/1. Its pathway is purine metabolism; XMP biosynthesis via salvage pathway; XMP from xanthine: step 1/1. Functionally, purine salvage pathway enzyme that catalyzes the transfer of the ribosyl-5-phosphate group from 5-phospho-alpha-D-ribose 1-diphosphate (PRPP) to the N9 position of the 6-oxopurines guanine and xanthine to form the corresponding ribonucleotides GMP (guanosine 5'-monophosphate) and XMP (xanthosine 5'-monophosphate), with the release of PPi. To a lesser extent, also acts on hypoxanthine. This chain is Xanthine-guanine phosphoribosyltransferase, found in Brucella canis (strain ATCC 23365 / NCTC 10854 / RM-666).